Consider the following 610-residue polypeptide: Aspartate--tRNA(Asp/Asn) ligase (610 aa).

Glu182 lines the L-aspartate pocket. The aspartate stretch occupies residues Gln206–Lys209. Arg228 is an L-aspartate binding site. ATP is bound by residues Arg228–Glu230 and Gln237. His470 provides a ligand contact to L-aspartate. Glu506 provides a ligand contact to ATP. Arg513 lines the L-aspartate pocket. Gly558 to Arg561 contributes to the ATP binding site.

The protein belongs to the class-II aminoacyl-tRNA synthetase family. Type 1 subfamily. Homodimer.

Its subcellular location is the cytoplasm. It catalyses the reaction tRNA(Asx) + L-aspartate + ATP = L-aspartyl-tRNA(Asx) + AMP + diphosphate. Its function is as follows. Aspartyl-tRNA synthetase with relaxed tRNA specificity since it is able to aspartylate not only its cognate tRNA(Asp) but also tRNA(Asn). Reaction proceeds in two steps: L-aspartate is first activated by ATP to form Asp-AMP and then transferred to the acceptor end of tRNA(Asp/Asn). The polypeptide is Aspartate--tRNA(Asp/Asn) ligase (Acidobacterium capsulatum (strain ATCC 51196 / DSM 11244 / BCRC 80197 / JCM 7670 / NBRC 15755 / NCIMB 13165 / 161)).